Here is a 364-residue protein sequence, read N- to C-terminus: Gap junction delta-4 protein (364 aa).

The Cytoplasmic segment spans residues Met-1–Thr-19. Residues Ile-20–Ala-40 traverse the membrane as a helical segment. At Gly-41–Arg-76 the chain is on the extracellular side. Residues Phe-77–Leu-97 form a helical membrane-spanning segment. Topologically, residues His-98 to Arg-128 are cytoplasmic. Residues Met-129–Ala-149 form a helical membrane-spanning segment. At Arg-150 to Ser-173 the chain is on the extracellular side. The chain crosses the membrane as a helical span at residues Leu-174–Leu-194. Residues Leu-195 to Val-364 are Cytoplasmic-facing. A compositionally biased stretch (polar residues) spans His-331–Lys-340. A disordered region spans residues His-331–Val-364.

It belongs to the connexin family. Delta-type subfamily. As to quaternary structure, a connexon is composed of a hexamer of connexins.

It is found in the cell membrane. The protein resides in the cell junction. The protein localises to the gap junction. In terms of biological role, one gap junction consists of a cluster of closely packed pairs of transmembrane channels, the connexons, through which materials of low MW diffuse from one cell to a neighboring cell. This Mus musculus (Mouse) protein is Gap junction delta-4 protein (Gjd4).